The primary structure comprises 359 residues: Protein RecA (359 aa).

ATP is bound at residue 73-80 (GPESSGKT).

Belongs to the RecA family.

The protein resides in the cytoplasm. Its function is as follows. Can catalyze the hydrolysis of ATP in the presence of single-stranded DNA, the ATP-dependent uptake of single-stranded DNA by duplex DNA, and the ATP-dependent hybridization of homologous single-stranded DNAs. It interacts with LexA causing its activation and leading to its autocatalytic cleavage. The sequence is that of Protein RecA from Desulfovibrio desulfuricans (strain ATCC 27774 / DSM 6949 / MB).